A 117-amino-acid chain; its full sequence is Large ribosomal subunit protein bL17 (117 aa).

Belongs to the bacterial ribosomal protein bL17 family. Part of the 50S ribosomal subunit. Contacts protein L32.

This is Large ribosomal subunit protein bL17 from Neorickettsia sennetsu (strain ATCC VR-367 / Miyayama) (Ehrlichia sennetsu).